Consider the following 213-residue polypeptide: Probable elongation factor 1-beta/1-delta 1 (213 aa).

This sequence belongs to the EF-1-beta/EF-1-delta family. EF-1 is composed of 4 subunits: alpha, beta, delta, and gamma.

In terms of biological role, EF-1-beta and EF-1-delta stimulate the exchange of GDP bound to EF-1-alpha to GTP. This chain is Probable elongation factor 1-beta/1-delta 1 (eef-1B.1), found in Caenorhabditis elegans.